Consider the following 705-residue polypeptide: Dolichyl-diphosphooligosaccharide--protein glycosyltransferase subunit STT3A (705 aa).

Topologically, residues 1–17 (MTKFGFLRLSYEKQDTL) are cytoplasmic. The chain crosses the membrane as a helical span at residues 18–38 (LKLLILSMAAVLSFSTRLFAV). At 39–119 (LRFESVIHEF…IDIRNVCVFL (81 aa)) the chain is on the lumenal side. The short motif at 47-49 (EFD) is the DXD motif 1 element. Position 49 (D49) interacts with Mn(2+). Residues 120–138 (APLFSSFTTIVTYHLTKEL) traverse the membrane as a helical segment. Topologically, residues 139 to 140 (KD) are cytoplasmic. A helical transmembrane segment spans residues 141-158 (AGAGLLAAAMIAVVPGYI). The Lumenal portion of the chain corresponds to 159–169 (SRSVAGSYDNE). Residues D167 and E169 each contribute to the Mn(2+) site. Residues 167 to 169 (DNE) carry the DXD motif 2 motif. Residues 170–189 (GIAIFCMLLTYYMWIKAVKT) form a helical membrane-spanning segment. Topologically, residues 190–191 (GS) are cytoplasmic. Residues 192–206 (ICWAAKCALAYFYMV) traverse the membrane as a helical segment. The Lumenal segment spans residues 207-211 (SSWGG). A helical transmembrane segment spans residues 212-228 (YVFLINLIPLHVLVLML). Topologically, residues 229–233 (TGRFS) are cytoplasmic. The helical transmembrane segment at 234–259 (HRIYVAYCTVYCLGTILSMQISFVGF) threads the bilayer. Residues 260–267 (QPVLSSEH) are Lumenal-facing. Residues 268-287 (MAAFGVFGLCQIHAFVDYLR) form a helical membrane-spanning segment. Topologically, residues 288–300 (SKLNPQQFEVLFR) are cytoplasmic. The helical transmembrane segment at 301–321 (SVISLVGFVLLTVGALLMLTG) threads the bilayer. Residues 322-356 (KISPWTGRFYSLLDPSYAKNNIPIIASVSEHQPTT) lie on the Lumenal side of the membrane. The SVSE motif signature appears at 348–351 (SVSE). A helical transmembrane segment spans residues 357 to 379 (WSSYYFDLQLLVFMFPVGLYYCF). The Cytoplasmic portion of the chain corresponds to 380–385 (SNLSDA). The helical transmembrane segment at 386–402 (RIFIIMYGVTSMYFSAV) threads the bilayer. The Lumenal segment spans residues 403-406 (MVRL). Residue R405 coordinates dolichyl diphosphooligosaccharide. Residues 407-428 (MLVLAPVMCILSGIGVSQVLST) form a helical membrane-spanning segment. The Cytoplasmic portion of the chain corresponds to 429–453 (YMKNLDISRPDKKSKKQQDSTYPIK). Residues 454 to 473 (NEVASGMILVMAFFLITYTF) traverse the membrane as a helical segment. Topologically, residues 474-705 (HSTWVTSEAY…DLDNRGLSRT (232 aa)) are lumenal. The tract at residues 525–527 (WWD) is interacts with target acceptor peptide in protein substrate. The WWDYG motif motif lies at 525 to 529 (WWDYG). Y530 is a binding site for dolichyl diphosphooligosaccharide. 2 N-linked (GlcNAc...) asparagine glycosylation sites follow: N537 and N544. Residue N548 is glycosylated (N-linked (GlcNAc...) (high mannose) asparagine). The DK motif signature appears at 592–599 (DINKFLWM).

This sequence belongs to the STT3 family. As to quaternary structure, component of the oligosaccharyltransferase (OST) complex. There are 2 OST complexes, OST-A and OST-B, which contain STT3A or STT3B as catalytic subunit, respectively. OST-A and OST-B contain common core subunits RPN1, RPN2, OST48, OST4, DAD1 and TMEM258, and OST-A contains DC2/OSTC and KRTCAP2/KCP2 specific accessory subunits. OST-A complex assembly occurs through the formation of 3 subcomplexes. Subcomplex 1 contains RPN1 and TMEM258, subcomplex 2 contains the OST-A-specific subunits STT3A, DC2/OSTC, and KCP2 as well as the core subunit OST4, and subcomplex 3 contains RPN2, DAD1, and OST48. The OST-A complex can form stable complexes with the Sec61 complex or with both the Sec61 and TRAP complexes. Mg(2+) is required as a cofactor. Mn(2+) serves as cofactor. As to expression, expressed at high levels in placenta, liver, muscle and pancreas, and at very low levels in brain, lung and kidney. Expressed in skin fibroblasts (at protein level).

The protein localises to the endoplasmic reticulum. Its subcellular location is the endoplasmic reticulum membrane. It carries out the reaction a di-trans,poly-cis-dolichyl diphosphooligosaccharide + L-asparaginyl-[protein] = N(4)-(oligosaccharide-(1-&gt;4)-N-acetyl-beta-D-glucosaminyl-(1-&gt;4)-N-acetyl-beta-D-glucosaminyl)-L-asparaginyl-[protein] + a di-trans,poly-cis-dolichyl diphosphate + H(+). It functions in the pathway protein modification; protein glycosylation. With respect to regulation, STT3A, but not STT3B, is specifically inhibited by the N-glycosylation inhibitor NGI-235, which prevents productive binding pose of the glycan donor in the active site of STT3A. Its function is as follows. Catalytic subunit of the oligosaccharyl transferase (OST) complex that catalyzes the initial transfer of a defined glycan (Glc(3)Man(9)GlcNAc(2) in eukaryotes) from the lipid carrier dolichol-pyrophosphate to an asparagine residue within an Asn-X-Ser/Thr consensus motif in nascent polypeptide chains, the first step in protein N-glycosylation. N-glycosylation occurs cotranslationally and the complex associates with the Sec61 complex at the channel-forming translocon complex that mediates protein translocation across the endoplasmic reticulum (ER). All subunits are required for a maximal enzyme activity. This subunit contains the active site and the acceptor peptide and donor lipid-linked oligosaccharide (LLO) binding pockets. STT3A is present in the majority of OST complexes and mediates cotranslational N-glycosylation of most sites on target proteins, while STT3B-containing complexes are required for efficient post-translational glycosylation and mediate glycosylation of sites that have been skipped by STT3A. STT3A-containing OST-A complex is also required to prevent hyperglycosylation of some target proteins by preventing glycosylation of facultative sites before folding of target proteins is completed. The polypeptide is Dolichyl-diphosphooligosaccharide--protein glycosyltransferase subunit STT3A (Homo sapiens (Human)).